The chain runs to 176 residues: ATP-dependent protease subunit HslV (176 aa).

The active site involves Thr-2. Residues Gly-157, Cys-160, and Thr-163 each contribute to the Na(+) site.

It belongs to the peptidase T1B family. HslV subfamily. In terms of assembly, a double ring-shaped homohexamer of HslV is capped on each side by a ring-shaped HslU homohexamer. The assembly of the HslU/HslV complex is dependent on binding of ATP.

It is found in the cytoplasm. It catalyses the reaction ATP-dependent cleavage of peptide bonds with broad specificity.. Its activity is regulated as follows. Allosterically activated by HslU binding. Its function is as follows. Protease subunit of a proteasome-like degradation complex believed to be a general protein degrading machinery. The protein is ATP-dependent protease subunit HslV of Erwinia tasmaniensis (strain DSM 17950 / CFBP 7177 / CIP 109463 / NCPPB 4357 / Et1/99).